An 85-amino-acid polypeptide reads, in one-letter code: Beta-toxin BmKAS (85 aa).

The N-terminal stretch at 1–19 (MKTVIFLIVSSLLLIGVKT) is a signal peptide. The LCN-type CS-alpha/beta domain occupies 20-82 (DNGYLLDKYT…LWNYNTNKCN (63 aa)). Intrachain disulfides connect Cys-31–Cys-81, Cys-35–Cys-56, Cys-42–Cys-63, and Cys-46–Cys-65.

As to expression, expressed by the venom gland.

The protein localises to the secreted. In terms of biological role, beta toxins bind voltage-independently at site-4 of sodium channels (Nav) and shift the voltage of activation toward more negative potentials thereby affecting sodium channel activation and promoting spontaneous and repetitive firing. It binds to distinct receptor sites of mammal and insect voltage-gated sodium channels. It displays antinociceptive effect in rat models, which is due to its specific modulation of sodium channels of sensory neurons. It also significantly stimulates the binding of [3H]-ryanodine to ryanodine receptors on the sarcoplasmic reticulum of the skeletal muscle through an indirect mechanism. And it promotes noradrenaline release from the rat hippocampus slice. This Olivierus martensii (Manchurian scorpion) protein is Beta-toxin BmKAS.